The primary structure comprises 197 residues: MEFMHNLIPTVIEHTGNYERVFDIYSRLLRERIIFLSGEINDPKADTVIAQLLFLESEDSNKDIYLYLNSPGGSITAGLAIYDTMQYIKPDVRTICIGQAASMGAFLLAAGAKGKRESLTYSRIMIHQPWGGISGQASDINIQANEILRLKKLIIDIMSNQIGVDKEKLALDMERDYFMTSSDALKYGLIDNILVRE.

Serine 102 (nucleophile) is an active-site residue. The active site involves histidine 127.

This sequence belongs to the peptidase S14 family. Fourteen ClpP subunits assemble into 2 heptameric rings which stack back to back to give a disk-like structure with a central cavity, resembling the structure of eukaryotic proteasomes.

It is found in the cytoplasm. It carries out the reaction Hydrolysis of proteins to small peptides in the presence of ATP and magnesium. alpha-casein is the usual test substrate. In the absence of ATP, only oligopeptides shorter than five residues are hydrolyzed (such as succinyl-Leu-Tyr-|-NHMec, and Leu-Tyr-Leu-|-Tyr-Trp, in which cleavage of the -Tyr-|-Leu- and -Tyr-|-Trp bonds also occurs).. Cleaves peptides in various proteins in a process that requires ATP hydrolysis. Has a chymotrypsin-like activity. Plays a major role in the degradation of misfolded proteins. This Borreliella afzelii (strain PKo) (Borrelia afzelii) protein is ATP-dependent Clp protease proteolytic subunit.